The chain runs to 360 residues: Peptide chain release factor 1 (360 aa).

Gln-235 is modified (N5-methylglutamine).

Belongs to the prokaryotic/mitochondrial release factor family. In terms of processing, methylated by PrmC. Methylation increases the termination efficiency of RF1.

It is found in the cytoplasm. Functionally, peptide chain release factor 1 directs the termination of translation in response to the peptide chain termination codons UAG and UAA. The protein is Peptide chain release factor 1 of Burkholderia vietnamiensis (strain G4 / LMG 22486) (Burkholderia cepacia (strain R1808)).